Reading from the N-terminus, the 159-residue chain is MAEQVVEILVSGGKATAGPPLGPAIGPLGVNIMQVVQKINEMTKDYDGMSVPVKVIVNTDKRTFEVEVGIPPASALVKKELGITTGSQEPKHQVAGNLTMEQVVKIAKMKQDAMLAYNLKNASKEVIGTCVSVGVNVEGMTPKEAQKAVDAGQFDSYFN.

This sequence belongs to the universal ribosomal protein uL11 family. Part of the ribosomal stalk of the 50S ribosomal subunit. Interacts with L10 and the large rRNA to form the base of the stalk. L10 forms an elongated spine to which L12 dimers bind in a sequential fashion forming a multimeric L10(L12)X complex.

Forms part of the ribosomal stalk which helps the ribosome interact with GTP-bound translation factors. This is Large ribosomal subunit protein uL11 from Methanococcus maripaludis (strain C6 / ATCC BAA-1332).